Here is a 281-residue protein sequence, read N- to C-terminus: Bifunctional protein FolD (281 aa).

Residues 165–167, Thr192, and Val233 contribute to the NADP(+) site; that span reads GRG.

Belongs to the tetrahydrofolate dehydrogenase/cyclohydrolase family. Homodimer.

The catalysed reaction is (6R)-5,10-methylene-5,6,7,8-tetrahydrofolate + NADP(+) = (6R)-5,10-methenyltetrahydrofolate + NADPH. The enzyme catalyses (6R)-5,10-methenyltetrahydrofolate + H2O = (6R)-10-formyltetrahydrofolate + H(+). It participates in one-carbon metabolism; tetrahydrofolate interconversion. Functionally, catalyzes the oxidation of 5,10-methylenetetrahydrofolate to 5,10-methenyltetrahydrofolate and then the hydrolysis of 5,10-methenyltetrahydrofolate to 10-formyltetrahydrofolate. The protein is Bifunctional protein FolD of Corynebacterium diphtheriae (strain ATCC 700971 / NCTC 13129 / Biotype gravis).